The following is a 300-amino-acid chain: Phospholipase A1 (300 aa).

Cysteine 4 and cysteine 87 form a disulfide bridge. The Nucleophile role is filled by serine 137. Aspartate 165 functions as the Charge relay system in the catalytic mechanism. 2 disulfide bridges follow: cysteine 176/cysteine 181 and cysteine 218/cysteine 227. The Charge relay system role is filled by histidine 229. Cystine bridges form between cysteine 244/cysteine 268, cysteine 245/cysteine 293, and cysteine 261/cysteine 266.

The protein belongs to the AB hydrolase superfamily. Lipase family. As to expression, expressed by the venom gland.

It localises to the secreted. The enzyme catalyses a 1,2-diacyl-sn-glycero-3-phosphocholine + H2O = a 2-acyl-sn-glycero-3-phosphocholine + a fatty acid + H(+). With respect to regulation, local inflammatory effects are inhibited by antiserotonin drugs (cyproheptadine and methysergide), indomethacin, betamethasone, and antihistamine (chlorpheniramine). Functionally, catalyzes the hydrolysis of phosphatidylcholine with phospholipase A1 activity. Shows potent hemolytic activity that is responsible for its lethal effect. May act as an allergen. In vivo, induces local inflammatory effects. The chain is Phospholipase A1 from Vespa basalis (Hornet).